The primary structure comprises 914 residues: Protein translocase subunit SecA (914 aa).

ATP contacts are provided by residues Gln86, 104-108, and Asp512; that span reads GEGKT. Cys898, Cys900, Cys909, and His910 together coordinate Zn(2+).

The protein belongs to the SecA family. Monomer and homodimer. Part of the essential Sec protein translocation apparatus which comprises SecA, SecYEG and auxiliary proteins SecDF-YajC and YidC. It depends on Zn(2+) as a cofactor.

The protein resides in the cell inner membrane. The protein localises to the cytoplasm. It carries out the reaction ATP + H2O + cellular proteinSide 1 = ADP + phosphate + cellular proteinSide 2.. Part of the Sec protein translocase complex. Interacts with the SecYEG preprotein conducting channel. Has a central role in coupling the hydrolysis of ATP to the transfer of proteins into and across the cell membrane, serving both as a receptor for the preprotein-SecB complex and as an ATP-driven molecular motor driving the stepwise translocation of polypeptide chains across the membrane. This Bordetella petrii (strain ATCC BAA-461 / DSM 12804 / CCUG 43448) protein is Protein translocase subunit SecA.